Consider the following 41-residue polypeptide: MYRKSTLAMLIALLTSAASAHAQTDISTIEARLNALEKRLQ.

The first 22 residues, 1–22, serve as a signal peptide directing secretion; it reads MYRKSTLAMLIALLTSAASAHA.

Belongs to the porin LamB (TC 1.B.3) family. Homotrimer.

It localises to the cell outer membrane. Functionally, porin for sucrose uptake. This Salmonella thompson protein is Sucrose porin (scrY).